The primary structure comprises 537 residues: Multidrug resistance protein Stp (537 aa).

Helical transmembrane passes span 6–26 (LLTL…ALIV), 46–66 (WVVA…ATLA), 77–97 (IGVS…SIAV), 104–124 (AQGL…SAAF), 136–156 (IWTA…GLLV), 163–183 (SIFY…LCYV), 200–220 (LLFI…PQIG), 223–243 (SVQT…FVWL), 262–282 (YALA…MLLL), 300–320 (LMIL…GHLV), 327–347 (VPIL…IFSE), 352–372 (ALVL…LTPI), 397–417 (AIGS…WLSA), and 478–498 (VALL…WRWF).

This sequence belongs to the major facilitator superfamily. EmrB family.

The protein resides in the cell membrane. Functionally, contributes to spectinomycin and tetracycline resistance. This chain is Multidrug resistance protein Stp (stp), found in Mycobacterium tuberculosis (strain ATCC 25618 / H37Rv).